We begin with the raw amino-acid sequence, 220 residues long: Ribonuclease HII (220 aa).

The region spanning 16–216 is the RNase H type-2 domain; the sequence is PVFAGIDEAG…VRPNPAAEEQ (201 aa). Residues D22, E23, and D114 each coordinate a divalent metal cation.

It belongs to the RNase HII family. Requires Mn(2+) as cofactor. Mg(2+) is required as a cofactor.

It is found in the cytoplasm. It carries out the reaction Endonucleolytic cleavage to 5'-phosphomonoester.. Endonuclease that specifically degrades the RNA of RNA-DNA hybrids. This Nitratidesulfovibrio vulgaris (strain ATCC 29579 / DSM 644 / CCUG 34227 / NCIMB 8303 / VKM B-1760 / Hildenborough) (Desulfovibrio vulgaris) protein is Ribonuclease HII.